The following is a 198-amino-acid chain: Acyl carrier protein phosphodiesterase (198 aa).

This sequence belongs to the AcpH family.

The catalysed reaction is holo-[ACP] + H2O = apo-[ACP] + (R)-4'-phosphopantetheine + H(+). Functionally, converts holo-ACP to apo-ACP by hydrolytic cleavage of the phosphopantetheine prosthetic group from ACP. The polypeptide is Acyl carrier protein phosphodiesterase (Photorhabdus laumondii subsp. laumondii (strain DSM 15139 / CIP 105565 / TT01) (Photorhabdus luminescens subsp. laumondii)).